A 362-amino-acid polypeptide reads, in one-letter code: tRNA-specific 2-thiouridylase MnmA (362 aa).

ATP contacts are provided by residues 6–13 (AMSGGVDS) and Leu-32. Cys-101 acts as the Nucleophile in catalysis. Cys-101 and Cys-197 are disulfide-bonded. Residue Gly-125 participates in ATP binding. The interaction with tRNA stretch occupies residues 147–149 (KDQ). The active-site Cysteine persulfide intermediate is the Cys-197.

This sequence belongs to the MnmA/TRMU family.

The protein resides in the cytoplasm. The catalysed reaction is S-sulfanyl-L-cysteinyl-[protein] + uridine(34) in tRNA + AH2 + ATP = 2-thiouridine(34) in tRNA + L-cysteinyl-[protein] + A + AMP + diphosphate + H(+). In terms of biological role, catalyzes the 2-thiolation of uridine at the wobble position (U34) of tRNA, leading to the formation of s(2)U34. This is tRNA-specific 2-thiouridylase MnmA from Saccharopolyspora erythraea (strain ATCC 11635 / DSM 40517 / JCM 4748 / NBRC 13426 / NCIMB 8594 / NRRL 2338).